We begin with the raw amino-acid sequence, 1056 residues long: RNA cytidine acetyltransferase (1056 aa).

An ATP-binding site is contributed by 286–295; the sequence is GRGKSAALGI. Residues 433-446 show a composition bias toward polar residues; sequence QNNTSGRESTQTAV. Residues 433–463 are disordered; it reads QNNTSGRESTQTAVVSRDNKEKDSHLHSQSR. Over residues 449-463 the composition is skewed to basic and acidic residues; that stretch reads RDNKEKDSHLHSQSR. Residue Arg-475 coordinates ATP. The 141-residue stretch at 566 to 706 folds into the N-acetyltransferase domain; sequence VLLPPIDPKD…VKLRDAKTLP (141 aa). Acetyl-CoA contacts are provided by residues 638–640, 645–651, and Asn-739; these read IAT and ASMGYGS. Phosphoserine is present on residues Ser-1001, Ser-1007, and Ser-1010.

It belongs to the RNA cytidine acetyltransferase family. NAT10 subfamily. In terms of assembly, interacts with TAN1. Associates with 90S pre-ribosomal particles.

The protein localises to the nucleus. It localises to the nucleolus. The catalysed reaction is a cytidine in 18S rRNA + acetyl-CoA + ATP + H2O = an N(4)-acetylcytidine in 18S rRNA + ADP + phosphate + CoA + H(+). The enzyme catalyses a cytidine in tRNA + acetyl-CoA + ATP + H2O = an N(4)-acetylcytidine in tRNA + ADP + phosphate + CoA + H(+). Functionally, RNA cytidine acetyltransferase with specificity toward both 18S rRNA and tRNAs. Catalyzes the formation of N(4)-acetylcytidine (ac4C) at positions 1280 and 1773 in 18S rRNA. Required for early nucleolar cleavages of precursor rRNA at sites A0, A1 and A2 during 18S rRNA synthesis. Catalyzes the formation of ac4C at position 12 in serine and leucine tRNAs. Requires the tRNA-binding adapter protein TAN1 for full tRNA acetyltransferase activity but not for 18S rRNA acetylation. The polypeptide is RNA cytidine acetyltransferase (Saccharomyces cerevisiae (strain ATCC 204508 / S288c) (Baker's yeast)).